The sequence spans 347 residues: Phosphate acyltransferase (347 aa).

The protein belongs to the PlsX family. As to quaternary structure, homodimer. Probably interacts with PlsY.

It is found in the cytoplasm. The enzyme catalyses a fatty acyl-[ACP] + phosphate = an acyl phosphate + holo-[ACP]. It functions in the pathway lipid metabolism; phospholipid metabolism. Its function is as follows. Catalyzes the reversible formation of acyl-phosphate (acyl-PO(4)) from acyl-[acyl-carrier-protein] (acyl-ACP). This enzyme utilizes acyl-ACP as fatty acyl donor, but not acyl-CoA. The sequence is that of Phosphate acyltransferase from Pediococcus pentosaceus (strain ATCC 25745 / CCUG 21536 / LMG 10740 / 183-1w).